The sequence spans 222 residues: uncharacterized protein (222 aa).

Residues 1 to 27 (MSFTRRKFVLGMGTVIFFTGSASSLLA) constitute a signal peptide (tat-type signal). 4Fe-4S ferredoxin-type domains are found at residues 37–66 (YAMI…PAQG), 83–114 (TQYH…RDEQ), and 115–144 (GIVR…LNPV). 16 residues coordinate [4Fe-4S] cluster: Cys-46, Cys-49, Cys-52, Cys-56, Cys-92, Cys-95, Cys-100, Cys-104, Cys-124, Cys-127, Cys-130, Cys-134, Cys-151, Cys-154, Cys-167, and Cys-171.

In terms of processing, predicted to be exported by the Tat system. The position of the signal peptide cleavage has not been experimentally proven.

This is an uncharacterized protein from Escherichia coli O157:H7.